Here is a 342-residue protein sequence, read N- to C-terminus: MSINIEHAIIHEISQDSQGQLRCRLRPQPLLNGQAVEVMLDELHQTYTGKAGKGFGYFGIHGDDGEANPAFANALTQYRGGDLGFVEFSGQASKLLQEELSKYDFSQGGFLLMSCYTSITSDYLFVALLSAKSSMTVLDDMELSQNNHLDLNNIQLAARIDLTEWQADKDSRKYISFIRGRAGRKVADFFLDFMGCVEGVNTKAQNKTLMNAVEDFVASSELTKDERQQCRNKVFEYCSERFDEGADIEIKDLADELADQGMDSFYDFARGGSYDLDEEFPADKSTLRQLKKFSGTGGGVTLSFDGGHLGQRVIYDPISDTILIKGVPANLKDQLDRRLKGE.

The protein belongs to the YejK family.

Its subcellular location is the cytoplasm. It localises to the nucleoid. The polypeptide is Nucleoid-associated protein Sbal223_1817 (Shewanella baltica (strain OS223)).